The sequence spans 388 residues: LL-diaminopimelate aminotransferase (388 aa).

Substrate is bound by residues Y16 and G41. Pyridoxal 5'-phosphate-binding positions include Y70, 104–105 (SK), Y129, N179, Y210, and 239–241 (SLS). Substrate-binding residues include K105, Y129, and N179. Residue K242 is modified to N6-(pyridoxal phosphate)lysine. Residue R250 coordinates pyridoxal 5'-phosphate. Residue R368 coordinates substrate.

Belongs to the class-I pyridoxal-phosphate-dependent aminotransferase family. LL-diaminopimelate aminotransferase subfamily. As to quaternary structure, homodimer. Pyridoxal 5'-phosphate serves as cofactor.

The catalysed reaction is (2S,6S)-2,6-diaminopimelate + 2-oxoglutarate = (S)-2,3,4,5-tetrahydrodipicolinate + L-glutamate + H2O + H(+). It functions in the pathway amino-acid biosynthesis; L-lysine biosynthesis via DAP pathway; LL-2,6-diaminopimelate from (S)-tetrahydrodipicolinate (aminotransferase route): step 1/1. Involved in the synthesis of meso-diaminopimelate (m-DAP or DL-DAP), required for both lysine and peptidoglycan biosynthesis. Catalyzes the direct conversion of tetrahydrodipicolinate to LL-diaminopimelate. The protein is LL-diaminopimelate aminotransferase of Oleidesulfovibrio alaskensis (strain ATCC BAA-1058 / DSM 17464 / G20) (Desulfovibrio alaskensis).